A 200-amino-acid chain; its full sequence is GTP cyclohydrolase-2 (200 aa).

Position 50–54 (50–54 (RIHSE)) interacts with GTP. 3 residues coordinate Zn(2+): Cys55, Cys66, and Cys68. GTP contacts are provided by residues Gln71, 93-95 (EGR), and Thr115. Asp127 functions as the Proton acceptor in the catalytic mechanism. Arg129 (nucleophile) is an active-site residue. Positions 150 and 155 each coordinate GTP.

The protein belongs to the GTP cyclohydrolase II family. Zn(2+) is required as a cofactor.

The enzyme catalyses GTP + 4 H2O = 2,5-diamino-6-hydroxy-4-(5-phosphoribosylamino)-pyrimidine + formate + 2 phosphate + 3 H(+). Its pathway is cofactor biosynthesis; riboflavin biosynthesis; 5-amino-6-(D-ribitylamino)uracil from GTP: step 1/4. In terms of biological role, catalyzes the conversion of GTP to 2,5-diamino-6-ribosylamino-4(3H)-pyrimidinone 5'-phosphate (DARP), formate and pyrophosphate. This chain is GTP cyclohydrolase-2, found in Acinetobacter baylyi (strain ATCC 33305 / BD413 / ADP1).